Here is an 835-residue protein sequence, read N- to C-terminus: Neuroligin-2 (835 aa).

Positions 1–14 (MWLLALCLVGLAGA) are cleaved as a signal peptide. The Extracellular portion of the chain corresponds to 15 to 677 (QRGGGGPGGG…DSRDYSTELS (663 aa)). N-linked (GlcNAc...) asparagine glycosylation is found at Asn-98 and Asn-136. 3 disulfides stabilise this stretch: Cys-106-Cys-141, Cys-317-Cys-328, and Cys-487-Cys-521. Asn-522 is a glycosylation site (N-linked (GlcNAc...) asparagine). A disordered region spans residues 623–668 (PPYATRWPPRPPAGAPGTRRPPPPATLPPEPEPEPGPRAYDRFPGD). Residues 630-658 (PPRPPAGAPGTRRPPPPATLPPEPEPEPG) show a composition bias toward pro residues. The helical transmembrane segment at 678 to 698 (VTVAVGASLLFLNILAFAALY) threads the bilayer. A required for interaction with LHFPL4 region spans residues 678-698 (VTVAVGASLLFLNILAFAALY). Residues 699–835 (YKRDRRQELR…LPHPHSTTRV (137 aa)) lie on the Cytoplasmic side of the membrane. Ser-713 and Ser-718 each carry phosphoserine. The disordered stretch occupies residues 790 to 835 (LLPSGLGPPPPPPPPSLHPFGPFPPPPPTATSHNNTLPHPHSTTRV). Residues 795 to 818 (LGPPPPPPPPSLHPFGPFPPPPPT) show a composition bias toward pro residues. The span at 823–835 (NNTLPHPHSTTRV) shows a compositional bias: polar residues.

It belongs to the type-B carboxylesterase/lipase family. As to quaternary structure, interacts with neurexins NRXN1, NRXN2 and NRXN3. Interaction with neurexins is mediated by heparan sulfate glycan modification on neurexin. Interacts (via its C-terminus) with DLG4/PSD-95 (via PDZ domain 3). Interacts with PATJ. Interacts with GPHN. Interacts with MDGA1 and MDGA2. Found in a complex with MAGI2 and IGSF9B, where it interacts with MAGI2 (via WW 1, WW 2 and PDZ 2 domains). Identified in a complex of 720 kDa composed of LHFPL4, NLGN2, GABRA1, GABRB2, GABRG2 and GABRB3. Interacts with LHFPL4; leading to mutual regulation of the protein level and synaptic clustering. Interacts with NLGN2. Expressed in the blood vessel walls. Detected in colon, brain and pancreas islets of Langerhans (at protein level). Detected in brain, and at lower levels in pancreas islet beta cells.

It localises to the cell membrane. Its subcellular location is the postsynaptic cell membrane. The protein localises to the presynaptic cell membrane. Transmembrane scaffolding protein involved in cell-cell interactions via its interactions with neurexin family members. Mediates cell-cell interactions both in neurons and in other types of cells, such as Langerhans beta cells. Plays a role in synapse function and synaptic signal transmission, especially via gamma-aminobutyric acid receptors (GABA(A) receptors). Functions by recruiting and clustering synaptic proteins. Promotes clustering of postsynaptic GABRG2 and GPHN. Promotes clustering of postsynaptic LHFPL4. Modulates signaling by inhibitory synapses, and thereby plays a role in controlling the ratio of signaling by excitatory and inhibitory synapses and information processing. Required for normal signal amplitude from inhibitory synapses, but is not essential for normal signal frequency. May promote the initial formation of synapses, but is not essential for this. In vitro, triggers the de novo formation of presynaptic structures. Mediates cell-cell interactions between Langerhans beta cells and modulates insulin secretion. The polypeptide is Neuroligin-2 (NLGN2) (Homo sapiens (Human)).